The primary structure comprises 105 residues: Large ribosomal subunit protein uL24 (105 aa).

It belongs to the universal ribosomal protein uL24 family. Part of the 50S ribosomal subunit.

Its function is as follows. One of two assembly initiator proteins, it binds directly to the 5'-end of the 23S rRNA, where it nucleates assembly of the 50S subunit. One of the proteins that surrounds the polypeptide exit tunnel on the outside of the subunit. In Xylella fastidiosa (strain M23), this protein is Large ribosomal subunit protein uL24.